Reading from the N-terminus, the 720-residue chain is Cyclic nucleotide-gated ion channel 17 (720 aa).

Residues 1-85 are Cytoplasmic-facing; the sequence is MELRKDKLLM…SEIVLKWNWV (85 aa). A helical transmembrane segment spans residues 86 to 106; sequence FIVSCMVALFIDPLYFFVPAI. Over 107-121 the chain is Extracellular; sequence GGDKNYPCARTDTSL. A helical transmembrane segment spans residues 122–142; the sequence is SILVTFFRTIADLFYLLHIFI. The Cytoplasmic portion of the chain corresponds to 143 to 178; the sequence is KFRTGFIAPNSSTRVFGRGELVMDPKAIAWRYIKSD. Residues 179 to 199 traverse the membrane as a helical segment; it reads FIIDLIATLPLPQIVIWFVIS. At 200–211 the chain is on the extracellular side; sequence TTKSYRFDHNNN. A helical membrane pass occupies residues 212–232; that stretch reads AIALIVLLQYIPRFYLIIPLS. Residues 233–252 are Cytoplasmic-facing; the sequence is SQIVKATGVVTKTAWAGAAY. Residues 253–273 form a helical membrane-spanning segment; the sequence is NLLLYMLASHVLGAAWYILSV. The Extracellular segment spans residues 274–377; it reads DRYTSCWKSR…LSTTMFMGET (104 aa). A helical transmembrane segment spans residues 378-398; sequence TFAVLIAIFGLVLFAHLIGNM. Topologically, residues 399-720 are cytoplasmic; sequence QTYLQSLTVR…EPDFSAEHDD (322 aa). A nucleoside 3',5'-cyclic phosphate contacts are provided by residues 481 to 605 and glutamate 552; that span reads FFSQ…SKKL. The interval 597-612 is calmodulin-binding; that stretch reads FRRLHSKKLQHTFRFY. Residues 617 to 646 form the IQ domain; that stretch reads RTWAACFIQAAWRRYKRRVMENNLTAIESM.

This sequence belongs to the cyclic nucleotide-gated cation channel (TC 1.A.1.5) family. Homotetramer or heterotetramer. Part of a functional complex containing PSKR1, BAK1, CNGC17, and AHA. Interacts with AHA1, AHA2, and BAK1, but not with PSKR1 or BRI1.

Its subcellular location is the cell membrane. In terms of biological role, probable cyclic nucleotide-gated ion channel. Forms a functional cation-translocating unit with AHAs that is activated by PSKR1/BAK1 and possibly other BAK1/RLK complexes. Required for PSK-induced protoplast expansion. This is Cyclic nucleotide-gated ion channel 17 from Arabidopsis thaliana (Mouse-ear cress).